A 187-amino-acid polypeptide reads, in one-letter code: MDTAPTWFTGQLLLALPGIGDPRFEHSVIAMISHDEDGAMGIGIADPIEGMTVGAVLDQLGIEHEAPLDQPVYLGGPVEPSRGFVLHSRDWGGEGAVLVADRWMVSSSHDILRAIGEGRGPSRWLVALGYAGWSPGQLEGEMVRHGWHVTPGSDALLFDTPPARRWQAAFAEAGVDARLLTTKGGEA.

It belongs to the UPF0301 (AlgH) family.

The sequence is that of UPF0301 protein Sala_0165 from Sphingopyxis alaskensis (strain DSM 13593 / LMG 18877 / RB2256) (Sphingomonas alaskensis).